A 71-amino-acid polypeptide reads, in one-letter code: Translational regulator CsrA (71 aa).

The protein belongs to the CsrA/RsmA family. As to quaternary structure, homodimer; the beta-strands of each monomer intercalate to form a hydrophobic core, while the alpha-helices form wings that extend away from the core.

The protein resides in the cytoplasm. Functionally, a translational regulator that binds mRNA to regulate translation initiation and/or mRNA stability. Usually binds in the 5'-UTR at or near the Shine-Dalgarno sequence preventing ribosome-binding, thus repressing translation. Its main target seems to be the major flagellin gene, while its function is anatagonized by FliW. The polypeptide is Translational regulator CsrA (Clostridium botulinum (strain Alaska E43 / Type E3)).